The chain runs to 140 residues: PDZ domain-containing protein 11 (140 aa).

The region spanning 47–129 is the PDZ domain; that stretch reads TITLKKPPGA…ISMRVRFFPY (83 aa).

As to quaternary structure, interacts with ATP2B1, ATP2B2, ATP2B3, ATP2B4 and ATP7A. Interacts with PLEKHA7 (via WW domains) at zonula adherens; this interaction is essential for the interaction between PLEKHA7 and the ADAM10-binding protein TSPAN33. Interacts with SLC5A6. Widely expressed (at protein level).

It is found in the secreted. The protein resides in the cytoplasm. The protein localises to the cell junction. It localises to the adherens junction. Its subcellular location is the cell membrane. Mediates docking of ADAM10 to zonula adherens by interacting with PLEKHA7 which is required for PLEKHA7 to interact with the ADAM10-binding protein TSPAN33. This Homo sapiens (Human) protein is PDZ domain-containing protein 11 (PDZD11).